A 115-amino-acid polypeptide reads, in one-letter code: ATP synthase subunit g, mitochondrial (115 aa).

The residue at position 1 (Met-1) is an N-acetylmethionine. Residues Ser-3 and Ser-62 each carry the phosphoserine modification.

The protein belongs to the ATPase g subunit family. F-type ATPases have 2 components, CF(1) - the catalytic core - and CF(0) - the membrane proton channel. In yeast, the dimeric form of ATP synthase consists of 17 polypeptides: alpha, beta, gamma, delta, epsilon, 4 (B), 5 (OSCP), 6 (A), 8, 9 (C), d, E (Tim11), f, g, h, i/j and k. Phosphorylation on Ser-62 impairs ATP synthase dimerization.

The protein resides in the mitochondrion membrane. Its function is as follows. Mitochondrial membrane ATP synthase (F(1)F(0) ATP synthase or Complex V) produces ATP from ADP in the presence of a proton gradient across the membrane which is generated by electron transport complexes of the respiratory chain. F-type ATPases consist of two structural domains, F(1) - containing the extramembraneous catalytic core, and F(0) - containing the membrane proton channel, linked together by a central stalk and a peripheral stalk. During catalysis, ATP synthesis in the catalytic domain of F(1) is coupled via a rotary mechanism of the central stalk subunits to proton translocation. Part of the complex F(0) domain. Minor subunit located with subunit a in the membrane. This chain is ATP synthase subunit g, mitochondrial (ATP20), found in Saccharomyces cerevisiae (strain ATCC 204508 / S288c) (Baker's yeast).